The chain runs to 195 residues: Probable nicotinate-nucleotide adenylyltransferase (195 aa).

It belongs to the NadD family.

It catalyses the reaction nicotinate beta-D-ribonucleotide + ATP + H(+) = deamido-NAD(+) + diphosphate. Its pathway is cofactor biosynthesis; NAD(+) biosynthesis; deamido-NAD(+) from nicotinate D-ribonucleotide: step 1/1. Functionally, catalyzes the reversible adenylation of nicotinate mononucleotide (NaMN) to nicotinic acid adenine dinucleotide (NaAD). The polypeptide is Probable nicotinate-nucleotide adenylyltransferase (Chlorobaculum tepidum (strain ATCC 49652 / DSM 12025 / NBRC 103806 / TLS) (Chlorobium tepidum)).